A 79-amino-acid polypeptide reads, in one-letter code: uncharacterized protein (79 aa).

The region spanning 10–60 is the SpoVT-AbrB domain; it reads EAVLTMDSKGQILLPKELRERAGLKAGDRLVAIAGCDENEEVCCLILVKAE.

This is an uncharacterized protein from Archaeoglobus fulgidus (strain ATCC 49558 / DSM 4304 / JCM 9628 / NBRC 100126 / VC-16).